The primary structure comprises 966 residues: MATIELHAWYRQYRKLKEEAADAILLFRFGDFYETFDDDAKLIAELLDITLTRKEYAVDKRLPKDQQKLYAPMAGMPYHAVDRYVSELIARGYRVAIAEQLSETEAMRNDTRPRSVYAAGLTPVESSGKMVQRAIVRVITPGTVIDPAMLPDRTNNYLAAVIVEQGKVGLAYADLSTGEFAAAEFTDARALMQLQAELARLSPAEVLVPDDEALRLPNLEPVQARLSQDLAPLTKEEREALLPHERVARRLEGASAASWTQGYVTEWPLWRWELATTTEVLCEHLALPSLAVCGLDGRPLATRAAGALLQYAQVTQRQRVSQLRALRVYHTGAYMLLDPQTRRNLELLESGGRQGAKASLIAVLDRTCTAMGARLLRRWITQPLIVIEPLQVRQHAVARLVAETMARLEVRSALADLPDMERALNRIAQGITVATPRDMTQLRAALRKLPAVAQAVQALLPDLLAAEMPGEPPLVFDVCADVLDLLERALDDDPPALLGSSNYLRAAEEGGERPRRVIRPGFDQRLDALIRASRHAQEFIDRLESKERERTGIRSLKVGYNQVFGYYIEISRAVDAKLIPAHYERKQTLVNAERYVTEELKYYEGLLSDARLKLVDLERDIFQRLCDELQPHLDRLRATIAAVARIDALAALAEVAVRGRYVQPRLRTDRVLRIKQGRHPVVERTLSEPFIGNDIDLDGEQAQILIITGPNMAGKSTFLRQVALITLMAQIGSFVPADEAEIGLVDRIFTRIGAQDDIATGQSTFMVEMTETAALLMQSTPRSLIILDEVGRGTSTYDGMAIARAVVEYIHDHPRLGCRTLFATHYHELIALERELPRVRNYHMAAVERDGRVVFLHELRPGGADRSYGIHVAELAGIPPEVIRRASALLADLEGQRPPSSPAQPPAPPAPVVVPAQETGQGMQLSFFDLAPHPVVEYLRRLRIEELTPLEALNRLAELQRLAGQG.

709–716 contributes to the ATP binding site; the sequence is GPNMAGKS. Residues 894-914 are disordered; that stretch reads EGQRPPSSPAQPPAPPAPVVV. Over residues 899-912 the composition is skewed to pro residues; sequence PSSPAQPPAPPAPV.

Belongs to the DNA mismatch repair MutS family.

This protein is involved in the repair of mismatches in DNA. It is possible that it carries out the mismatch recognition step. This protein has a weak ATPase activity. This chain is DNA mismatch repair protein MutS, found in Chloroflexus aurantiacus (strain ATCC 29366 / DSM 635 / J-10-fl).